Consider the following 65-residue polypeptide: Large ribosomal subunit protein uL30 (65 aa).

It belongs to the universal ribosomal protein uL30 family. Part of the 50S ribosomal subunit.

The sequence is that of Large ribosomal subunit protein uL30 from Methylobacillus flagellatus (strain ATCC 51484 / DSM 6875 / VKM B-1610 / KT).